The chain runs to 381 residues: tRNA-specific 2-thiouridylase MnmA (381 aa).

ATP-binding positions include 26-33 and L52; that span reads AMSGGVDS. C120 functions as the Nucleophile in the catalytic mechanism. C120 and C217 form a disulfide bridge. G144 contributes to the ATP binding site. An interaction with tRNA region spans residues 166 to 168; the sequence is RDQ. C217 acts as the Cysteine persulfide intermediate in catalysis.

It belongs to the MnmA/TRMU family.

Its subcellular location is the cytoplasm. It carries out the reaction S-sulfanyl-L-cysteinyl-[protein] + uridine(34) in tRNA + AH2 + ATP = 2-thiouridine(34) in tRNA + L-cysteinyl-[protein] + A + AMP + diphosphate + H(+). Its function is as follows. Catalyzes the 2-thiolation of uridine at the wobble position (U34) of tRNA, leading to the formation of s(2)U34. The polypeptide is tRNA-specific 2-thiouridylase MnmA (Ruegeria sp. (strain TM1040) (Silicibacter sp.)).